The chain runs to 536 residues: GMP synthase [glutamine-hydrolyzing] (536 aa).

The 194-residue stretch at 19–212 (RILILDFGSQ…VHEICDCAGS (194 aa)) folds into the Glutamine amidotransferase type-1 domain. The active-site Nucleophile is the Cys96. Active-site residues include His186 and Glu188. Residues 213–411 (WTPDNIIDMR…LGLPAKMINR (199 aa)) enclose the GMPS ATP-PPase domain. Position 240-246 (240-246 (SGGVDSS)) interacts with ATP.

As to quaternary structure, homodimer.

It catalyses the reaction XMP + L-glutamine + ATP + H2O = GMP + L-glutamate + AMP + diphosphate + 2 H(+). It participates in purine metabolism; GMP biosynthesis; GMP from XMP (L-Gln route): step 1/1. In terms of biological role, catalyzes the synthesis of GMP from XMP. The protein is GMP synthase [glutamine-hydrolyzing] of Psychrobacter arcticus (strain DSM 17307 / VKM B-2377 / 273-4).